The chain runs to 240 residues: Homeobox protein DLX-4 (240 aa).

Disordered stretches follow at residues 44 to 70 (DLSYSQSYGHPRSYSHPGPATPGDSYL) and 175 to 194 (LKQSSGEPEEDFSGRPPSLS). Positions 116–175 (LRKPRTIYSSLQLQHLNQRFQHTQYLALPERAQLAAQLGLTQTQVKIWFQNKRSKYKKLL) form a DNA-binding region, homeobox.

Belongs to the distal-less homeobox family. As to expression, branchial arches, molar and incisor teeth and limbs.

It localises to the nucleus. May play a role in determining the production of hemoglobin S. May act as a repressor. During embryonic development, plays a role in palatogenesis. This chain is Homeobox protein DLX-4 (Dlx4), found in Mus musculus (Mouse).